The following is a 453-amino-acid chain: Acid phosphatase (453 aa).

The signal sequence occupies residues 1-18; the sequence is MFLQNLFLGFLAVVCANA. Histidine 69 serves as the catalytic Nucleophile. N-linked (GlcNAc...) asparagine glycans are attached at residues asparagine 95, asparagine 151, asparagine 183, asparagine 193, asparagine 243, and asparagine 319. Aspartate 331 acts as the Proton donor in catalysis. N-linked (GlcNAc...) asparagine glycosylation is found at asparagine 410, asparagine 429, and asparagine 443.

Belongs to the histidine acid phosphatase family.

The protein localises to the secreted. It localises to the cell wall. The enzyme catalyses a phosphate monoester + H2O = an alcohol + phosphate. The protein is Acid phosphatase (pho1) of Schizosaccharomyces pombe (strain 972 / ATCC 24843) (Fission yeast).